Consider the following 439-residue polypeptide: 3-phosphoshikimate 1-carboxyvinyltransferase (439 aa).

3-phosphoshikimate is bound by residues Lys-27, Ser-28, and Arg-32. Lys-27 is a binding site for phosphoenolpyruvate. 2 residues coordinate phosphoenolpyruvate: Gly-101 and Arg-130. Residues Ser-175, Gln-177, Asp-326, and Lys-353 each contribute to the 3-phosphoshikimate site. A phosphoenolpyruvate-binding site is contributed by Gln-177. The active-site Proton acceptor is the Asp-326. Residues Arg-357 and Arg-399 each contribute to the phosphoenolpyruvate site.

The protein belongs to the EPSP synthase family. As to quaternary structure, monomer.

It localises to the cytoplasm. The enzyme catalyses 3-phosphoshikimate + phosphoenolpyruvate = 5-O-(1-carboxyvinyl)-3-phosphoshikimate + phosphate. It functions in the pathway metabolic intermediate biosynthesis; chorismate biosynthesis; chorismate from D-erythrose 4-phosphate and phosphoenolpyruvate: step 6/7. Its function is as follows. Catalyzes the transfer of the enolpyruvyl moiety of phosphoenolpyruvate (PEP) to the 5-hydroxyl of shikimate-3-phosphate (S3P) to produce enolpyruvyl shikimate-3-phosphate and inorganic phosphate. This Synechococcus sp. (strain WH7803) protein is 3-phosphoshikimate 1-carboxyvinyltransferase.